We begin with the raw amino-acid sequence, 1573 residues long: Mediator of RNA polymerase II transcription subunit 1 (1573 aa).

Residues 588 to 592 (LTSLL) carry the LXXLL motif 1 motif. 3 disordered regions span residues 595-691 (TSNS…EDDF), 774-883 (SKLP…FKDF), and 928-1564 (LGGP…GDDD). Positions 606 to 617 (PTPPQHTPPPAS) are enriched in pro residues. Positions 629-633 (LMNLL) match the LXXLL motif 2 motif. Residues 651-668 (ERQNSSGSPRTELGSSAS) are compositionally biased toward polar residues. Residues 678–691 (TGTEKMKNQTEDDF) are compositionally biased toward basic and acidic residues. 3 stretches are compositionally biased toward polar residues: residues 791–804 (RDSS…STLF), 835–864 (GSPN…QSGF), and 934–944 (QETQSRSQSPL). Over residues 949–961 (LGKDRPQKQKVKE) the composition is skewed to basic and acidic residues. Residues 963–973 (GNGGGAGGGLS) show a composition bias toward gly residues. Composition is skewed to low complexity over residues 1025–1038 (PTST…GTSG), 1053–1085 (KITI…SSSS), 1092–1116 (SSLS…MKIG), 1124–1143 (SGQS…SMGK), and 1155–1164 (SSNVNNSSGS). A compositionally biased stretch (polar residues) spans 1176-1193 (MNPSLSKPNISPSHSRPS). A compositionally biased stretch (low complexity) spans 1226-1277 (LSGSGSNSTTKSSSGLVSSGSLTQKPNSSSSSSSSSSSSSSSSSSSSSSFSS). Residues 1278–1290 (GVSQNLHSSSKGK) show a composition bias toward polar residues. A compositionally biased stretch (basic and acidic residues) spans 1350–1362 (PTKREKGEKDKSK). Polar residues-rich tracts occupy residues 1420–1435 (SQMQ…SGST) and 1443–1457 (PSHN…QALD). Low complexity predominate over residues 1461-1471 (ESGSSSIAEKS). A compositionally biased stretch (basic residues) spans 1496–1505 (KHKKHKKEKK). The segment covering 1506-1518 (RLKDKDRDREKKK) has biased composition (basic and acidic residues).

It belongs to the Mediator complex subunit 1 family. As to quaternary structure, component of the Mediator complex.

The protein localises to the nucleus. In terms of biological role, component of the Mediator complex, a coactivator involved in the regulated transcription of nearly all RNA polymerase II-dependent genes. Mediator functions as a bridge to convey information from gene-specific regulatory proteins to the basal RNA polymerase II transcription machinery. Mediator is recruited to promoters by direct interactions with regulatory proteins and serves as a scaffold for the assembly of a functional preinitiation complex with RNA polymerase II and the general transcription factors. This Xenopus tropicalis (Western clawed frog) protein is Mediator of RNA polymerase II transcription subunit 1 (med1).